A 252-amino-acid polypeptide reads, in one-letter code: Imidazole glycerol phosphate synthase subunit HisF (252 aa).

Residues Asp11 and Asp130 contribute to the active site.

The protein belongs to the HisA/HisF family. As to quaternary structure, heterodimer of HisH and HisF.

The protein localises to the cytoplasm. It catalyses the reaction 5-[(5-phospho-1-deoxy-D-ribulos-1-ylimino)methylamino]-1-(5-phospho-beta-D-ribosyl)imidazole-4-carboxamide + L-glutamine = D-erythro-1-(imidazol-4-yl)glycerol 3-phosphate + 5-amino-1-(5-phospho-beta-D-ribosyl)imidazole-4-carboxamide + L-glutamate + H(+). Its pathway is amino-acid biosynthesis; L-histidine biosynthesis; L-histidine from 5-phospho-alpha-D-ribose 1-diphosphate: step 5/9. Functionally, IGPS catalyzes the conversion of PRFAR and glutamine to IGP, AICAR and glutamate. The HisF subunit catalyzes the cyclization activity that produces IGP and AICAR from PRFAR using the ammonia provided by the HisH subunit. The sequence is that of Imidazole glycerol phosphate synthase subunit HisF from Alkaliphilus metalliredigens (strain QYMF).